The chain runs to 52 residues: MAVPKKRTSISKKRIRKKIWKRKGYWTSLKAFSLGKSLSTGNSKSFFVQQNK.

This sequence belongs to the bacterial ribosomal protein bL32 family.

The protein resides in the plastid. It localises to the chloroplast. The sequence is that of Large ribosomal subunit protein bL32c from Olimarabidopsis pumila (Dwarf rocket).